Reading from the N-terminus, the 147-residue chain is Large ribosomal subunit protein uL15 (147 aa).

Residues 20 to 54 (GRGIGSGKGKTSGKGHKGQKARGTGKVHPWFEGGQ) are disordered. The span at 30–44 (TSGKGHKGQKARGTG) shows a compositional bias: basic residues.

The protein belongs to the universal ribosomal protein uL15 family. In terms of assembly, part of the 50S ribosomal subunit.

Functionally, binds to the 23S rRNA. This Thermosipho africanus (strain TCF52B) protein is Large ribosomal subunit protein uL15.